The primary structure comprises 130 residues: Small ribosomal subunit protein uS9 (130 aa).

Belongs to the universal ribosomal protein uS9 family.

The protein is Small ribosomal subunit protein uS9 (rpsI) of Geobacillus stearothermophilus (Bacillus stearothermophilus).